The primary structure comprises 449 residues: Xylose isomerase (449 aa).

Active-site residues include histidine 101 and aspartate 104. Glutamate 232, glutamate 268, histidine 271, aspartate 296, aspartate 307, aspartate 309, and aspartate 340 together coordinate Mg(2+).

It belongs to the xylose isomerase family. In terms of assembly, homotetramer. The cofactor is Mg(2+).

It localises to the cytoplasm. It carries out the reaction alpha-D-xylose = alpha-D-xylulofuranose. The protein is Xylose isomerase of Bifidobacterium longum (strain DJO10A).